Consider the following 488-residue polypeptide: 3-octaprenyl-4-hydroxybenzoate carboxy-lyase (488 aa).

Asparagine 172 is a binding site for Mn(2+). Residues 175–177 (IYR), 189–191 (RWL), and 194–195 (RG) contribute to the prenylated FMN site. Mn(2+) is bound at residue glutamate 238. Catalysis depends on aspartate 287, which acts as the Proton donor.

This sequence belongs to the UbiD family. As to quaternary structure, homohexamer. Requires prenylated FMN as cofactor. It depends on Mn(2+) as a cofactor.

The protein resides in the cell membrane. The enzyme catalyses a 4-hydroxy-3-(all-trans-polyprenyl)benzoate + H(+) = a 2-(all-trans-polyprenyl)phenol + CO2. Its pathway is cofactor biosynthesis; ubiquinone biosynthesis. Functionally, catalyzes the decarboxylation of 3-octaprenyl-4-hydroxy benzoate to 2-octaprenylphenol, an intermediate step in ubiquinone biosynthesis. In Hahella chejuensis (strain KCTC 2396), this protein is 3-octaprenyl-4-hydroxybenzoate carboxy-lyase.